The following is a 383-amino-acid chain: Acetylornithine deacetylase (383 aa).

Position 80 (histidine 80) interacts with Zn(2+). Aspartate 82 is an active-site residue. Residue aspartate 112 participates in Zn(2+) binding. Residue glutamate 144 is part of the active site. Zn(2+)-binding residues include glutamate 145, glutamate 169, and histidine 355.

Belongs to the peptidase M20A family. ArgE subfamily. In terms of assembly, homodimer. Zn(2+) serves as cofactor. It depends on Co(2+) as a cofactor. Glutathione is required as a cofactor.

The protein resides in the cytoplasm. It carries out the reaction N(2)-acetyl-L-ornithine + H2O = L-ornithine + acetate. It participates in amino-acid biosynthesis; L-arginine biosynthesis; L-ornithine from N(2)-acetyl-L-ornithine (linear): step 1/1. Functionally, catalyzes the hydrolysis of the amide bond of N(2)-acetylated L-amino acids. Cleaves the acetyl group from N-acetyl-L-ornithine to form L-ornithine, an intermediate in L-arginine biosynthesis pathway, and a branchpoint in the synthesis of polyamines. The protein is Acetylornithine deacetylase of Pectobacterium atrosepticum (strain SCRI 1043 / ATCC BAA-672) (Erwinia carotovora subsp. atroseptica).